The chain runs to 211 residues: Uridine kinase (211 aa).

12–19 is a binding site for ATP; sequence GGSGSGKT.

The protein belongs to the uridine kinase family.

The protein localises to the cytoplasm. The enzyme catalyses uridine + ATP = UMP + ADP + H(+). It carries out the reaction cytidine + ATP = CMP + ADP + H(+). Its pathway is pyrimidine metabolism; CTP biosynthesis via salvage pathway; CTP from cytidine: step 1/3. It participates in pyrimidine metabolism; UMP biosynthesis via salvage pathway; UMP from uridine: step 1/1. The sequence is that of Uridine kinase from Geobacillus kaustophilus (strain HTA426).